A 505-amino-acid chain; its full sequence is NADH-quinone oxidoreductase subunit N (505 aa).

14 consecutive transmembrane segments (helical) span residues 20-40 (ALAP…GDLF), 59-79 (ALAL…GGVF), 83-103 (GLAA…ALMS), 115-135 (GEYY…VSAG), 137-157 (AIVL…LVAL), 172-192 (FLMG…LYGL), 220-240 (AVVA…TVPF), 251-271 (APTT…FAVL), 285-305 (LWSD…NIAA), 314-334 (MLAY…AACT), 342-362 (AAYL…IIYL), 394-414 (LAAV…TAGF), 431-451 (ITVV…LGVA), and 481-501 (AVCL…LFWI).

This sequence belongs to the complex I subunit 2 family. In terms of assembly, NDH-1 is composed of 14 different subunits. Subunits NuoA, H, J, K, L, M, N constitute the membrane sector of the complex.

It localises to the cell inner membrane. It catalyses the reaction a quinone + NADH + 5 H(+)(in) = a quinol + NAD(+) + 4 H(+)(out). NDH-1 shuttles electrons from NADH, via FMN and iron-sulfur (Fe-S) centers, to quinones in the respiratory chain. The immediate electron acceptor for the enzyme in this species is believed to be ubiquinone. Couples the redox reaction to proton translocation (for every two electrons transferred, four hydrogen ions are translocated across the cytoplasmic membrane), and thus conserves the redox energy in a proton gradient. This chain is NADH-quinone oxidoreductase subunit N, found in Desulfovibrio desulfuricans (strain ATCC 27774 / DSM 6949 / MB).